A 354-amino-acid polypeptide reads, in one-letter code: Uroporphyrinogen decarboxylase (354 aa).

Substrate contacts are provided by residues 27-31, Phe-46, Asp-77, Tyr-154, Thr-209, and His-327; that span reads RQAGR.

It belongs to the uroporphyrinogen decarboxylase family. As to quaternary structure, homodimer.

The protein resides in the cytoplasm. The enzyme catalyses uroporphyrinogen III + 4 H(+) = coproporphyrinogen III + 4 CO2. Its pathway is porphyrin-containing compound metabolism; protoporphyrin-IX biosynthesis; coproporphyrinogen-III from 5-aminolevulinate: step 4/4. In terms of biological role, catalyzes the decarboxylation of four acetate groups of uroporphyrinogen-III to yield coproporphyrinogen-III. The chain is Uroporphyrinogen decarboxylase from Pseudomonas putida (strain ATCC 47054 / DSM 6125 / CFBP 8728 / NCIMB 11950 / KT2440).